Consider the following 465-residue polypeptide: Adenosylhomocysteinase (465 aa).

Residues Thr56, Asp131, and Glu191 each contribute to the substrate site. Residue 192–194 (TTT) participates in NAD(+) binding. Lys221 and Asp225 together coordinate substrate. NAD(+) is bound by residues Asn226, 255-260 (GYGDVG), Glu278, Asn313, 334-336 (IGH), and Asn379.

It belongs to the adenosylhomocysteinase family. It depends on NAD(+) as a cofactor.

Its subcellular location is the cytoplasm. The enzyme catalyses S-adenosyl-L-homocysteine + H2O = L-homocysteine + adenosine. Its pathway is amino-acid biosynthesis; L-homocysteine biosynthesis; L-homocysteine from S-adenosyl-L-homocysteine: step 1/1. Its function is as follows. May play a key role in the regulation of the intracellular concentration of adenosylhomocysteine. The chain is Adenosylhomocysteinase from Bartonella tribocorum (strain CIP 105476 / IBS 506).